Reading from the N-terminus, the 406-residue chain is Tyrosine--tRNA ligase (406 aa).

Position 35 (Tyr-35) interacts with L-tyrosine. Positions 40 to 49 match the 'HIGH' region motif; that stretch reads PTADSLHVGH. Tyr-168 and Gln-172 together coordinate L-tyrosine. The short motif at 228 to 232 is the 'KMSKS' region element; sequence KMGKT. Lys-231 contacts ATP. One can recognise an S4 RNA-binding domain in the interval 340-404; sequence LPILDVMAST…RGKKNYNKIE (65 aa).

The protein belongs to the class-I aminoacyl-tRNA synthetase family. TyrS type 1 subfamily. In terms of assembly, homodimer.

Its subcellular location is the cytoplasm. It carries out the reaction tRNA(Tyr) + L-tyrosine + ATP = L-tyrosyl-tRNA(Tyr) + AMP + diphosphate + H(+). Catalyzes the attachment of tyrosine to tRNA(Tyr) in a two-step reaction: tyrosine is first activated by ATP to form Tyr-AMP and then transferred to the acceptor end of tRNA(Tyr). This is Tyrosine--tRNA ligase from Clostridium beijerinckii (strain ATCC 51743 / NCIMB 8052) (Clostridium acetobutylicum).